A 299-amino-acid chain; its full sequence is ATP synthase gamma chain (299 aa).

This sequence belongs to the ATPase gamma chain family. As to quaternary structure, F-type ATPases have 2 components, CF(1) - the catalytic core - and CF(0) - the membrane proton channel. CF(1) has five subunits: alpha(3), beta(3), gamma(1), delta(1), epsilon(1). CF(0) has three main subunits: a, b and c.

It localises to the cell membrane. In terms of biological role, produces ATP from ADP in the presence of a proton gradient across the membrane. The gamma chain is believed to be important in regulating ATPase activity and the flow of protons through the CF(0) complex. The protein is ATP synthase gamma chain of Clavibacter sepedonicus (Clavibacter michiganensis subsp. sepedonicus).